We begin with the raw amino-acid sequence, 235 residues long: Elongation factor Tu, chloroplastic (235 aa).

A tr-type G domain is found at 1-125 (KNMITGAAQM…AVDSYIPTPE (125 aa)). 47-50 (NKED) provides a ligand contact to GTP.

It belongs to the TRAFAC class translation factor GTPase superfamily. Classic translation factor GTPase family. EF-Tu/EF-1A subfamily.

It is found in the plastid. It localises to the chloroplast. The enzyme catalyses GTP + H2O = GDP + phosphate + H(+). Functionally, GTP hydrolase that promotes the GTP-dependent binding of aminoacyl-tRNA to the A-site of ribosomes during protein biosynthesis. The sequence is that of Elongation factor Tu, chloroplastic (tufA) from Mantoniella squamata (Unicellular alga).